A 206-amino-acid chain; its full sequence is Fibroblast growth factor 4 (206 aa).

Residues 1–30 form the signal peptide; sequence MSGPGTAAVALLPAVLLALLAPWAGRGGAA.

Belongs to the heparin-binding growth factors family. As to quaternary structure, interacts with FGFR1, FGFR2, FGFR3 and FGFR4. Affinity between fibroblast growth factors (FGFs) and their receptors is increased by heparan sulfate glycosaminoglycans that function as coreceptors.

The protein resides in the secreted. Its function is as follows. Plays an important role in the regulation of embryonic development, cell proliferation, and cell differentiation. Required for normal limb and cardiac valve development during embryogenesis. May play a role in embryonic molar tooth bud development via inducing the expression of MSX1, MSX2 and MSX1-mediated expression of SDC1 in dental mesenchyme cells. The polypeptide is Fibroblast growth factor 4 (Homo sapiens (Human)).